A 613-amino-acid chain; its full sequence is MTEASARTIGPLPSRFSRDPKTPRSTDNAAAALLLAFTVLAILWANSPWAQSYSIFWDTDVAVSFGEYRAELSVKHLVNDGLMAFFFFIVGLEVKSEFVIGELTDRSRAAVPVVAAIAGLIVPAVIFLTFNPSGPDAQAWGVVISTDTAFLVGALAVIKPKFPARLRIFLLTLAVVDDVGALGAIALFYTDDLKLAPLAVAALLIAALAMVRRLPSLRGPAYAVLGFALWIALYLAHVHPTLAGVAVAVLIPVFTPERRQVEQTVDLVRAFRQSPNPQYARAVTRGLRESISINERLQTAVGPYVSFVVLPIFALANAGVHLDEQTITAAMSSTLTWGIVAGLVVGKFVGITAATALMSATGWGQLAPGLSLRRVAGGAALSGIGFTISLFIVDVAIEDPARQDEARVGVLIASVLAFTLSWALFRITDWISPPEPVGLTLVRPVDPERDHIRGDPDAPLVLVEYGDYECPFCGRATGAIDEVRTHFGDDLLYVWRHFPLERAHPRSFDAARASEGAAAQGKFFEMGRELFAHQDDLEWSDMYRYAVAIGLDIEQFDQDVRVHASKVLHRVRDDAQDAEVMDLNSTPTFFVNGKRHKGPWDAASLIRALEAGR.

Residues 1–23 (MTEASARTIGPLPSRFSRDPKTP) form a disordered region. Positions 1 to 408 (MTEASARTIG…DPARQDEARV (408 aa)) are na(+)/H(+) antiporter NhaA. The next 11 helical transmembrane spans lie at 29–49 (AAAA…NSPW), 81–101 (GLMA…FVIG), 110–130 (AVPV…FLTF), 138–158 (QAWG…LAVI), 168–188 (IFLL…IALF), 191–211 (DDLK…LAMV), 231–251 (IALY…AVLI), 300–320 (AVGP…NAGV), 337–357 (WGIV…ATAL), 377–397 (GGAA…DVAI), and 408–428 (VGVL…FRIT). Residues 409 to 613 (GVLIASVLAF…SLIRALEAGR (205 aa)) enclose the Thioredoxin domain.

This sequence in the N-terminal section; belongs to the NhaA Na(+)/H(+) (TC 2.A.33) antiporter family.

Its subcellular location is the cell membrane. The catalysed reaction is Na(+)(in) + 2 H(+)(out) = Na(+)(out) + 2 H(+)(in). Na(+)/H(+) antiporter that extrudes sodium in exchange for external protons. In Mycobacterium sp. (strain KMS), this protein is Na(+)/H(+) antiporter NhaA 1.